Reading from the N-terminus, the 478-residue chain is Ankyrin repeat and BTB/POZ domain-containing protein 1 (478 aa).

2 ANK repeats span residues 1–31 and 35–64; these read MDTS…EVNV and WDST…RCEA. BTB domains follow at residues 115–182 and 272–346; these read SDVV…DIGV and PDIC…ELPP. Positions 451 to 477 form a coiled coil; that stretch reads VQTYSAIEEAQQRLRALEDLLVSIGLD.

The protein resides in the cytoplasm. In terms of biological role, may act as a mediator of the PTEN growth-suppressive signaling pathway. May play a role in developmental processes. The sequence is that of Ankyrin repeat and BTB/POZ domain-containing protein 1 from Mus musculus (Mouse).